The sequence spans 384 residues: MPKHLPADSVGIVEQHSLHFDEPLPLDCGRSLPAYDLVYETYGELNAERSNAILICHALSGSHHAAGYHSEEDRKPGWWEACVGPGKPIDTDRFYVVCCNNLGGCHGSTGPSSINPETHRPYGPDFPLVTVRDWVHSQARLADALGIERWAAVVGGSLGGMQAIQWAIDYPDRLGHVVAIAVAPRLSAQNIGFNEVARQAILTDPEFHGGRYYEHHTVPRRGLALARMLGHITYLSDDAMRDKFGRDLRADGGRYKFNFDVEFEVESYLRYQGRSFVDRFDANTYLLMTKVLDYFDPAAEYDHDLSAALAHVQARFLLISFSSDWRFPPERSREIVRALEDNQKPISYLEVETSQGHDAFLKPIPVYTEAFRAYMQGIAREVGA.

The region spanning 51 to 361 is the AB hydrolase-1 domain; that stretch reads NAILICHALS…ETSQGHDAFL (311 aa). Ser157 (nucleophile) is an active-site residue. Arg227 contacts substrate. Catalysis depends on residues Asp324 and His357. Asp358 is a substrate binding site.

It belongs to the AB hydrolase superfamily. MetX family. As to quaternary structure, homodimer.

It is found in the cytoplasm. The catalysed reaction is L-homoserine + succinyl-CoA = O-succinyl-L-homoserine + CoA. It functions in the pathway amino-acid biosynthesis; L-methionine biosynthesis via de novo pathway; O-succinyl-L-homoserine from L-homoserine: step 1/1. Functionally, transfers a succinyl group from succinyl-CoA to L-homoserine, forming succinyl-L-homoserine. The polypeptide is Homoserine O-succinyltransferase (Alkalilimnicola ehrlichii (strain ATCC BAA-1101 / DSM 17681 / MLHE-1)).